The primary structure comprises 524 residues: Cytokinin dehydrogenase 7 (524 aa).

The first 22 residues, 1–22, serve as a signal peptide directing secretion; it reads MAARCSIAFMIMASCLSVVVSG. Asn42 carries an N-linked (GlcNAc...) asparagine glycan. In terms of domain architecture, FAD-binding PCMH-type spans 55 to 233; it reads VAAAPEAVLH…TRARIGLMPA (179 aa). FAD contacts are provided by Gly91 and Gly93. Position 94 is a pros-8alpha-FAD histidine (His94). The FAD site is built by Ser95 and Gln99. An N-linked (GlcNAc...) asparagine glycan is attached at Asn121. 5 residues coordinate FAD: Asp157, Thr162, Ser168, Ile172, and Ile223. Residues Asn277 and Asn320 are each glycosylated (N-linked (GlcNAc...) asparagine). Positions 472, 507, and 510 each coordinate FAD.

It belongs to the oxygen-dependent FAD-linked oxidoreductase family. As to quaternary structure, monomer. Requires FAD as cofactor.

Its subcellular location is the secreted. The protein resides in the extracellular space. It catalyses the reaction N(6)-dimethylallyladenine + A + H2O = 3-methyl-2-butenal + adenine + AH2. Its function is as follows. Catalyzes the oxidation of cytokinins, a family of N(6)-substituted adenine derivatives that are plant hormones, where the substituent is an isopentenyl group. This is Cytokinin dehydrogenase 7 (CKX7) from Oryza sativa subsp. japonica (Rice).